Here is a 364-residue protein sequence, read N- to C-terminus: A-type ATP synthase subunit C (364 aa).

The protein belongs to the V-ATPase V0D/AC39 subunit family. Has multiple subunits with at least A(3), B(3), C, D, E, F, H, I and proteolipid K(x).

It localises to the cell membrane. Functionally, component of the A-type ATP synthase that produces ATP from ADP in the presence of a proton gradient across the membrane. This chain is A-type ATP synthase subunit C, found in Desulfurococcus sp. (strain SY).